The chain runs to 74 residues: Cytochrome b559 subunit alpha (74 aa).

The helical transmembrane segment at 22-36 (VIHTVTIPSLFVAGW) threads the bilayer. Histidine 24 provides a ligand contact to heme.

This sequence belongs to the PsbE/PsbF family. In terms of assembly, heterodimer of an alpha subunit and a beta subunit. PSII is composed of 1 copy each of membrane proteins PsbA, PsbB, PsbC, PsbD, PsbE, PsbF, PsbH, PsbI, PsbJ, PsbK, PsbL, PsbM, PsbT, PsbX, PsbY, PsbZ, Psb30/Ycf12, at least 3 peripheral proteins of the oxygen-evolving complex and a large number of cofactors. It forms dimeric complexes. Requires heme b as cofactor.

It is found in the plastid. The protein localises to the cyanelle thylakoid membrane. In terms of biological role, this b-type cytochrome is tightly associated with the reaction center of photosystem II (PSII). PSII is a light-driven water:plastoquinone oxidoreductase that uses light energy to abstract electrons from H(2)O, generating O(2) and a proton gradient subsequently used for ATP formation. It consists of a core antenna complex that captures photons, and an electron transfer chain that converts photonic excitation into a charge separation. The protein is Cytochrome b559 subunit alpha of Cyanophora paradoxa.